The following is a 321-amino-acid chain: Histidine N-alpha-methyltransferase (321 aa).

An L-histidine-binding site is contributed by Y56. S-adenosyl-L-methionine is bound by residues G86, K92, D113, and 141–142 (DF). L-histidine is bound by residues N166, Y206, and 282-284 (EVS).

The protein belongs to the methyltransferase superfamily. EgtD family. In terms of assembly, monomer.

It carries out the reaction L-histidine + 3 S-adenosyl-L-methionine = hercynine + 3 S-adenosyl-L-homocysteine + 3 H(+). It participates in amino-acid biosynthesis; ergothioneine biosynthesis. Functionally, catalyzes the SAM-dependent triple methylation of the alpha-amino group of histidine to form hercynine, a step in the biosynthesis pathway of ergothioneine. Among all the proteinogenic amino acids, only L-histidine is a substrate. This Mycolicibacterium smegmatis (strain ATCC 700084 / mc(2)155) (Mycobacterium smegmatis) protein is Histidine N-alpha-methyltransferase.